A 138-amino-acid polypeptide reads, in one-letter code: ATP synthase epsilon chain (138 aa).

The protein belongs to the ATPase epsilon chain family. As to quaternary structure, F-type ATPases have 2 components, CF(1) - the catalytic core - and CF(0) - the membrane proton channel. CF(1) has five subunits: alpha(3), beta(3), gamma(1), delta(1), epsilon(1). CF(0) has three main subunits: a, b and c.

The protein localises to the cell membrane. Produces ATP from ADP in the presence of a proton gradient across the membrane. This is ATP synthase epsilon chain (atpC) from Buchnera aphidicola subsp. Schizaphis graminum (strain Sg).